The following is a 49-amino-acid chain: Large ribosomal subunit protein bL33A (49 aa).

This sequence belongs to the bacterial ribosomal protein bL33 family.

The polypeptide is Large ribosomal subunit protein bL33A (Bacillus pumilus (strain SAFR-032)).